A 107-amino-acid chain; its full sequence is Death-associated protein-like 1 (107 aa).

Residues 1–23 (MANEVQDLLSPRKGGHPPAVKAG) are disordered.

As to expression, expressed in hair follicle (at protein level).

May play a role in the early stages of epithelial differentiation or in apoptosis. The protein is Death-associated protein-like 1 (DAPL1) of Homo sapiens (Human).